The sequence spans 407 residues: Fructose-1,6-bisphosphatase, chloroplastic (407 aa).

The N-terminal 50 residues, 1 to 50 (MAAATASSQLIFSKPYSPSRLCPFQLCVFDAKSVLSSSRRKHVNGSGVRC), are a transit peptide targeting the chloroplast. Positions 126, 155, 176, 178, and 179 each coordinate Mg(2+). A substrate-binding site is contributed by 179–182 (DGSS). Cys203 and Cys223 are disulfide-bonded. Asn287, Tyr319, Tyr337, Tyr339, and Lys349 together coordinate substrate. Glu355 lines the Mg(2+) pocket.

It belongs to the FBPase class 1 family. In terms of assembly, homotetramer. It depends on Mg(2+) as a cofactor.

Its subcellular location is the plastid. The protein localises to the chloroplast stroma. The catalysed reaction is beta-D-fructose 1,6-bisphosphate + H2O = beta-D-fructose 6-phosphate + phosphate. It participates in carbohydrate biosynthesis; Calvin cycle. The sequence is that of Fructose-1,6-bisphosphatase, chloroplastic (FBP) from Pisum sativum (Garden pea).